We begin with the raw amino-acid sequence, 26 residues long: uncharacterized protein (26 aa).

The protein belongs to the asfivirus E66L family.

This is an uncharacterized protein from Ornithodoros (relapsing fever ticks).